The primary structure comprises 623 residues: Calnexin (623 aa).

A signal peptide spans 1–21 (MLNRKWSFVFLTFLLVISVNA). A Ca(2+)-binding site is contributed by aspartate 108. Residues cysteine 151 and cysteine 185 are joined by a disulfide bond. The an alpha-D-glucoside site is built by tyrosine 155, lysine 157, tyrosine 176, and aspartate 183. Asparagine 202 carries an N-linked (GlcNAc...) asparagine glycan. Positions 260–337 (SLTPPKEIFD…QKPQDWDEDM (78 aa)) are disordered. Over residues 266 to 276 (EIFDETDLKPE) the composition is skewed to basic and acidic residues. The tract at residues 267–400 (IFDETDLKPE…RLIDNPNYFE (134 aa)) is p domain (Extended arm). A run of 5 repeats spans residues 269 to 281 (DETD…WDER), 286 to 298 (DETA…WDEN), 305 to 317 (DESA…WNEE), 324 to 336 (DPEA…WDED), and 339 to 349 (GSWEAPLIDNP). 2 4 X approximate repeats regions span residues 269-336 (DETD…WDED) and 339-396 (GSWE…IDNP). Composition is skewed to acidic residues over residues 277-287 (DWDEREQIEDE) and 314-323 (WNEEENELIP). Cysteine 351 and cysteine 357 are joined by a disulfide. A run of 3 repeats spans residues 358–368 (GTWKPPTIKNP), 372–382 (GKWVRPKIANP), and 386–396 (GKWSPRLIDNP). Residue glutamate 416 coordinates an alpha-D-glucoside. Position 427 (aspartate 427) interacts with Ca(2+). Residues 480 to 500 (LWAVYILCILLPLIAIGVFCF) traverse the membrane as a helical segment. The tract at residues 536–623 (IAEDEEDNQP…AKRRTARRGD (88 aa)) is disordered. Over residues 556 to 565 (IDEDEQDEVE) the composition is skewed to acidic residues. Positions 566 to 581 (QQPSSSKTASSESSSA) are enriched in low complexity. The span at 614–623 (AKRRTARRGD) shows a compositional bias: basic residues.

It belongs to the calreticulin family. Post-translationally, glycosylation is important for its biological activity.

Its subcellular location is the endoplasmic reticulum membrane. It localises to the cytoplasm. The protein localises to the perinuclear region. It is found in the cytoplasmic vesicle. Its function is as follows. Calcium-binding protein that interacts with newly synthesized monoglucosylated glycoproteins in the endoplasmic reticulum. It may act in assisting protein assembly and/or in the retention within the ER of unassembled protein subunits. It seems to play a major role in the quality control apparatus of the ER by the retention of incorrectly folded proteins. Required for embryogenesis and larval development under heat and ER stress conditions. May be important for germ cell development. Involved in neuronal necrotic cell death. This chain is Calnexin, found in Caenorhabditis briggsae.